The chain runs to 469 residues: Light-independent protochlorophyllide reductase subunit N (469 aa).

The [4Fe-4S] cluster site is built by C24, C49, and C109.

This sequence belongs to the BchN/ChlN family. As to quaternary structure, protochlorophyllide reductase is composed of three subunits; ChlL, ChlN and ChlB. Forms a heterotetramer of two ChlB and two ChlN subunits. [4Fe-4S] cluster serves as cofactor.

It catalyses the reaction chlorophyllide a + oxidized 2[4Fe-4S]-[ferredoxin] + 2 ADP + 2 phosphate = protochlorophyllide a + reduced 2[4Fe-4S]-[ferredoxin] + 2 ATP + 2 H2O. Its pathway is porphyrin-containing compound metabolism; chlorophyll biosynthesis (light-independent). Component of the dark-operative protochlorophyllide reductase (DPOR) that uses Mg-ATP and reduced ferredoxin to reduce ring D of protochlorophyllide (Pchlide) to form chlorophyllide a (Chlide). This reaction is light-independent. The NB-protein (ChlN-ChlB) is the catalytic component of the complex. The polypeptide is Light-independent protochlorophyllide reductase subunit N (Synechocystis sp. (strain ATCC 27184 / PCC 6803 / Kazusa)).